The chain runs to 347 residues: Endophilin-A3 (347 aa).

The interval 1 to 21 is membrane-binding amphipathic helix; the sequence is MSVAGLKKQFHKASQLFSEKI. The BAR domain maps to 18–249; sequence SEKISGAEGT…LQMRISAASS (232 aa). Residues 60–87 are required for dimerization upon membrane association; sequence PNPAYRAKLGMLNTVSKIRGQVKTTGYP. Positions 181–201 form a coiled coil; the sequence is EEVRQAVEKFEESKELAERSM. An interaction with ARC region spans residues 218-254; sequence FIEAALDYHRQSTEILQELQSKLQMRISAASSVPRRE. The segment at 248–271 is disordered; sequence SSVPRREYKPRPVKRSSSELNGVS. Serine 265 is modified (phosphoserine). One can recognise an SH3 domain in the interval 285 to 344; sequence MDQPCCRGLYDFEPENQGELGFKEGDIITLTNQIDENWYEGMIHGESGFFPINYVEVIVP.

Belongs to the endophilin family. In terms of assembly, interacts with ARC. Interacts with DNM1, SGIP1 and SYNJ1. Interacts with the huntingtin exon 1 protein (HDEX1P) containing a glutamine repeat in the pathological range and promotes formation of insoluble polyglutamine-containing aggregates in vivo. Interacts with DYDC1. Interacts with FASLG. Interacts with ATXN2. Interacts with BIN2. In terms of tissue distribution, brain and testis.

It localises to the cytoplasm. The protein localises to the early endosome membrane. Its function is as follows. Implicated in endocytosis. May recruit other proteins to membranes with high curvature. This is Endophilin-A3 (SH3GL3) from Homo sapiens (Human).